The primary structure comprises 71 residues: Prokaryotic ubiquitin-like protein Pup (71 aa).

Residues 1–18 are compositionally biased toward low complexity; that stretch reads MATRDSGGQSQTGRSQQG. The interval 1 to 42 is disordered; sequence MATRDSGGQSQTGRSQQGEEIEDVTTEASAEAAERHAEITED. Positions 27–65 are ARC ATPase binding; that stretch reads EASAEAAERHAEITEDVDDLLDEIDSVLEENAEEFVRGY. Positions 29 to 60 form a coiled coil; it reads SAEAAERHAEITEDVDDLLDEIDSVLEENAEE. E71 participates in a covalent cross-link: Isoglutamyl lysine isopeptide (Glu-Lys) (interchain with K-? in acceptor proteins).

Belongs to the prokaryotic ubiquitin-like protein family. In terms of assembly, strongly interacts with the proteasome-associated ATPase ARC through a hydrophobic interface; the interacting region of Pup lies in its C-terminal half. There is one Pup binding site per ARC hexamer ring.

It functions in the pathway protein degradation; proteasomal Pup-dependent pathway. In terms of biological role, protein modifier that is covalently attached to lysine residues of substrate proteins, thereby targeting them for proteasomal degradation. The tagging system is termed pupylation. The sequence is that of Prokaryotic ubiquitin-like protein Pup from Salinispora tropica (strain ATCC BAA-916 / DSM 44818 / JCM 13857 / NBRC 105044 / CNB-440).